The primary structure comprises 205 residues: uncharacterized protein (205 aa).

Belongs to the peptidase C56 family.

This is an uncharacterized protein from Methanocaldococcus jannaschii (strain ATCC 43067 / DSM 2661 / JAL-1 / JCM 10045 / NBRC 100440) (Methanococcus jannaschii).